A 1025-amino-acid polypeptide reads, in one-letter code: Beta-galactosidase (1025 aa).

Glu-482 serves as the catalytic Proton donor. Glu-551 (nucleophile) is an active-site residue.

This sequence belongs to the glycosyl hydrolase 2 family.

It catalyses the reaction Hydrolysis of terminal non-reducing beta-D-galactose residues in beta-D-galactosides.. The sequence is that of Beta-galactosidase (LAC4) from Kluyveromyces lactis (strain ATCC 8585 / CBS 2359 / DSM 70799 / NBRC 1267 / NRRL Y-1140 / WM37) (Yeast).